The chain runs to 291 residues: ATP synthase subunit a (291 aa).

A run of 6 helical transmembrane segments spans residues 50 to 70 (LDSMGWSIGLGVIFCLLFWIV), 108 to 128 (IAPLALTIFVWIFLMNLMDLI), 161 to 181 (DPNITLGMSLSVFVLILFYSI), 203 to 223 (PVAKALLIPVNLILELVTFLA), 241 to 261 (LIFILIALLPFWIQWALSVPW), and 262 to 282 (AIFHILVITLQAFIFMMLTIV).

Belongs to the ATPase A chain family. In terms of assembly, F-type ATPases have 2 components, CF(1) - the catalytic core - and CF(0) - the membrane proton channel. CF(1) has five subunits: alpha(3), beta(3), gamma(1), delta(1), epsilon(1). CF(0) has three main subunits: a(1), b(2) and c(9-12). The alpha and beta chains form an alternating ring which encloses part of the gamma chain. CF(1) is attached to CF(0) by a central stalk formed by the gamma and epsilon chains, while a peripheral stalk is formed by the delta and b chains.

It is found in the cell inner membrane. Key component of the proton channel; it plays a direct role in the translocation of protons across the membrane. This chain is ATP synthase subunit a, found in Acinetobacter baumannii (strain SDF).